The chain runs to 194 residues: Imidazoleglycerol-phosphate dehydratase (194 aa).

This sequence belongs to the imidazoleglycerol-phosphate dehydratase family.

The protein resides in the cytoplasm. It carries out the reaction D-erythro-1-(imidazol-4-yl)glycerol 3-phosphate = 3-(imidazol-4-yl)-2-oxopropyl phosphate + H2O. Its pathway is amino-acid biosynthesis; L-histidine biosynthesis; L-histidine from 5-phospho-alpha-D-ribose 1-diphosphate: step 6/9. The polypeptide is Imidazoleglycerol-phosphate dehydratase (Lacticaseibacillus casei (strain BL23) (Lactobacillus casei)).